The chain runs to 256 residues: Capsid protein (256 aa).

A Bipartite nuclear localization signal motif is present at residues 3–20 (KRPADIVISTPASKVRRK). Positions 40–54 (RRRTWVNRPMYRKPM) match the Nuclear localization signal motif. A zinc finger spans residues 68-85 (CEGPCKVQSYEQRHDVAH). Residues 101-122 (ITHRTGKRFCIKSIYVLGKIWM) carry the Nuclear export signal motif. The Bipartite nuclear localization signal motif lies at 200–247 (NRFYKIYNHCTYNHQEAAKYENHTENALLLYMACTHASNPVYATLKIR).

It belongs to the geminiviridae capsid protein family. As to quaternary structure, homomultimer. Binds to single-stranded and double-stranded viral DNA. Interacts (via nuclear localization signals) with host importin alpha-1a.

The protein localises to the virion. Its subcellular location is the host nucleus. Functionally, encapsidates the viral genome into characteristic twinned ('geminate') particles. Binds the genomic viral ssDNA and shuttles it into and out of the cell nucleus. Plays a role in protection of the genome from degradation, virus acquisition and transmission by insect vectors, infectivity, and systemic movement. The CP of monopartite geminiviruses is absolutely essential for virus movement. This is Capsid protein from Tomato leaf curl virus (strain Australia) (ToLCV).